Consider the following 588-residue polypeptide: Methylcrotonoyl-CoA carboxylase beta chain, mitochondrial (588 aa).

The region spanning 72-329 is the CoA carboxyltransferase N-terminal domain; it reads MNSTLKQLKE…KKQPSPVITE (258 aa). A carboxyltransferase region spans residues 72 to 570; that stretch reads MNSTLKQLKE…RKVIALSLSA (499 aa). The CoA carboxyltransferase C-terminal domain maps to 329 to 570; that stretch reads ETEEPLYPTS…RKVIALSLSA (242 aa). Residues 366–395 are acyl-CoA binding; that stretch reads RFDEFKELYGTTLICGFARVHGMPVGIIAN.

Belongs to the AccD/PCCB family. In terms of assembly, probably a dodecamer composed of six biotin-containing alpha subunits and six beta subunits.

It localises to the mitochondrion matrix. It catalyses the reaction 3-methylbut-2-enoyl-CoA + hydrogencarbonate + ATP = 3-methyl-(2E)-glutaconyl-CoA + ADP + phosphate + H(+). It functions in the pathway amino-acid degradation; L-leucine degradation; (S)-3-hydroxy-3-methylglutaryl-CoA from 3-isovaleryl-CoA: step 2/3. Carboxyltransferase subunit of the 3-methylcrotonyl-CoA carboxylase, an enzyme that catalyzes the conversion of 3-methylcrotonyl-CoA to 3-methylglutaconyl-CoA, a critical step for leucine and isovaleric acid catabolism. The sequence is that of Methylcrotonoyl-CoA carboxylase beta chain, mitochondrial (mccb) from Dictyostelium discoideum (Social amoeba).